A 422-amino-acid chain; its full sequence is MAM and fibronectin type III domain-containing protein 1 (422 aa).

Residues 1–75 enclose the MAM domain; it reads KFYYHMYGAT…VSLMEGICAG (75 aa). Fibronectin type-III domains follow at residues 2 to 74, 196 to 286, and 291 to 386; these read FYYH…GICA, PGWN…QART, and PSRA…YIVT.

In terms of tissue distribution, component of the acid-insoluble and acid-soluble organic matrix of the aragonitic skeleton (at protein level).

The protein resides in the secreted. This Acropora millepora (Staghorn coral) protein is MAM and fibronectin type III domain-containing protein 1.